Reading from the N-terminus, the 279-residue chain is Fatty acid metabolism regulator protein (279 aa).

Positions 6–74 (KSPAGFAEKY…HGKPTKVNQF (69 aa)) constitute an HTH gntR-type domain. The segment at residues 34-53 (ERELSELIGVTRTTLREVLQ) is a DNA-binding region (H-T-H motif).

Homodimer.

It localises to the cytoplasm. In terms of biological role, multifunctional regulator of fatty acid metabolism. This is Fatty acid metabolism regulator protein from Vibrio parahaemolyticus serotype O3:K6 (strain RIMD 2210633).